A 329-amino-acid polypeptide reads, in one-letter code: Probable allantoicase (329 aa).

The protein belongs to the allantoicase family.

It carries out the reaction allantoate + H2O = (S)-ureidoglycolate + urea. It functions in the pathway nitrogen metabolism; (S)-allantoin degradation; (S)-ureidoglycolate from allantoate (aminidohydrolase route): step 1/1. The sequence is that of Probable allantoicase from Nocardia farcinica (strain IFM 10152).